Consider the following 573-residue polypeptide: Probable CoA ligase CCL13 (573 aa).

ATP-binding positions include 216 to 224 (TSGTTARPK), 352 to 357 (HIYGLT), aspartate 449, 461 to 464 (LKDR), and lysine 556. Residues 284-352 (SPKAIFDNIH…MEEMGFQVNH (69 aa)) are SBD1. Positions 353–429 (IYGLTETHGP…FRGNTVMSGY (77 aa)) are SBD2.

This sequence belongs to the ATP-dependent AMP-binding enzyme family.

The protein resides in the cytoplasm. Its subcellular location is the cytosol. The sequence is that of Probable CoA ligase CCL13 from Humulus lupulus (European hop).